The sequence spans 375 residues: Pectate lyase C (375 aa).

Positions 1 to 22 are cleaved as a signal peptide; the sequence is MKSLITPITAGLLLALSQPLLA. Residues cysteine 94 and cysteine 177 are joined by a disulfide bond. Ca(2+) is bound by residues aspartate 151, aspartate 153, glutamate 188, and aspartate 192. Arginine 240 is an active-site residue. Residues cysteine 351 and cysteine 374 are joined by a disulfide bond.

This sequence belongs to the polysaccharide lyase 1 family. PLADES subfamily. Ca(2+) serves as cofactor.

The protein resides in the secreted. It catalyses the reaction Eliminative cleavage of (1-&gt;4)-alpha-D-galacturonan to give oligosaccharides with 4-deoxy-alpha-D-galact-4-enuronosyl groups at their non-reducing ends.. It functions in the pathway glycan metabolism; pectin degradation; 2-dehydro-3-deoxy-D-gluconate from pectin: step 2/5. Functionally, involved in maceration and soft-rotting of plant tissue. This chain is Pectate lyase C, found in Dickeya chrysanthemi (Pectobacterium chrysanthemi).